The chain runs to 298 residues: Small ribosomal subunit protein uS2 (298 aa).

Residues 232–298 (ETFEGDDIPS…TAEAEEPAAE (67 aa)) are disordered. Acidic residues predominate over residues 234-250 (FEGDDIPSAIDFEDETP). A compositionally biased stretch (low complexity) spans 251–276 (EPVAEVADAEVAAAEPVAEAAPTAEA).

This sequence belongs to the universal ribosomal protein uS2 family.

This is Small ribosomal subunit protein uS2 from Acaryochloris marina (strain MBIC 11017).